Here is a 610-residue protein sequence, read N- to C-terminus: Membrane protein insertase YidC (610 aa).

The helical transmembrane segment at 7–27 (FFITIALSILILALWQVFYLG) threads the bilayer. Residues 36–82 (QARIEEQQRQAQQAAQNRQASSSTGDTPQMPANPDSIPGQGDTKAAG) form a disordered region. A compositionally biased stretch (low complexity) spans 44 to 55 (RQAQQAAQNRQA). Helical transmembrane passes span 358-378 (FDLL…FYLI), 387-407 (NFGV…FPLA), 458-478 (WPVL…YVTI), 510-530 (TVPH…IMFL), and 546-566 (IFTW…AGLV).

This sequence belongs to the OXA1/ALB3/YidC family. Type 1 subfamily. As to quaternary structure, interacts with the Sec translocase complex via SecD. Specifically interacts with transmembrane segments of nascent integral membrane proteins during membrane integration.

It is found in the cell inner membrane. Required for the insertion and/or proper folding and/or complex formation of integral membrane proteins into the membrane. Involved in integration of membrane proteins that insert both dependently and independently of the Sec translocase complex, as well as at least some lipoproteins. Aids folding of multispanning membrane proteins. This Brucella melitensis biotype 1 (strain ATCC 23456 / CCUG 17765 / NCTC 10094 / 16M) protein is Membrane protein insertase YidC.